The sequence spans 697 residues: Elongation factor G 2 (697 aa).

Positions 5–280 constitute a tr-type G domain; that stretch reads SKYRNIGIFA…AVVDYLPAPD (276 aa). GTP contacts are provided by residues 14–21, 78–82, and 132–135; these read AHVDAGKT, DTPGH, and NKLD.

The protein belongs to the TRAFAC class translation factor GTPase superfamily. Classic translation factor GTPase family. EF-G/EF-2 subfamily.

The protein resides in the cytoplasm. Functionally, catalyzes the GTP-dependent ribosomal translocation step during translation elongation. During this step, the ribosome changes from the pre-translocational (PRE) to the post-translocational (POST) state as the newly formed A-site-bound peptidyl-tRNA and P-site-bound deacylated tRNA move to the P and E sites, respectively. Catalyzes the coordinated movement of the two tRNA molecules, the mRNA and conformational changes in the ribosome. The polypeptide is Elongation factor G 2 (fusB) (Shewanella oneidensis (strain ATCC 700550 / JCM 31522 / CIP 106686 / LMG 19005 / NCIMB 14063 / MR-1)).